Reading from the N-terminus, the 1004-residue chain is Ephrin type-A receptor 8 (1004 aa).

The signal sequence occupies residues 1 to 26 (MAPARARLSPALWVVTAAAAATCVSA). The Extracellular segment spans residues 27–541 (GRGEVNLLDT…KPRPRYDTRT (515 aa)). The region spanning 30 to 208 (EVNLLDTSTI…YYKKCPAMVR (179 aa)) is the Eph LBD domain. 2 consecutive Fibronectin type-III domains span residues 327–437 (PPSA…TNQA) and 438–533 (APSQ…TGKP). N-linked (GlcNAc...) asparagine glycosylation is found at asparagine 339, asparagine 406, and asparagine 431. The helical transmembrane segment at 542-562 (IVWICLTLITGLVVLLLLLIC) threads the bilayer. The mediates interaction with ANKS1A and ANKS1B stretch occupies residues 563–569 (KKRHCGY). Residues 563 to 1004 (KKRHCGYSKA…SSTQGPRRHL (442 aa)) lie on the Cytoplasmic side of the membrane. A mediates interaction with PIK3CG and required for endocytosis region spans residues 588-643 (APPPVFLPLNHPPGKFPETQFSAEPHTYEEPGRAGRSFTREIEASRIHIEKIIGSG). The residue at position 615 (tyrosine 615) is a Phosphotyrosine; by autocatalysis. The region spanning 634–895 (IHIEKIIGSG…HVVSVLDALV (262 aa)) is the Protein kinase domain. ATP is bound by residues 640–648 (IGSGESGEV) and lysine 666. Aspartate 759 acts as the Proton acceptor in catalysis. At tyrosine 838 the chain carries Phosphotyrosine; by autocatalysis. Residues 929–993 (NGDLTVGDWL…LGSIQTMRAQ (65 aa)) enclose the SAM domain. The PDZ-binding motif lies at 1002 to 1004 (RHL).

The protein belongs to the protein kinase superfamily. Tyr protein kinase family. Ephrin receptor subfamily. Heterotetramer upon binding of the ligand. The heterotetramer is composed of an ephrin dimer and a receptor dimer. Oligomerization is probably required to induce biological responses. May also form heterodimers with other ephrin receptors. Interacts with FYN; possible downstream effector of EPHA8 in regulation of cell adhesion. Interacts with PIK3CG; regulates integrin-mediated cell adhesion to substrate. Interacts with TIAM1; regulates clathrin-mediated endocytosis of EPHA8. Interacts with ANKS1A and ANKS1B; EPHA8 kinase activity-independent but stimulated by EPHA8 ubiquitination. In terms of processing, phosphorylated. Phosphorylation is stimulated upon binding of its ligands including EFNA2, EFNA3 and EFNA5. Autophosphorylation on Tyr-615 is critical for association with FYN. Autophosphorylation on Tyr-838 modulates tyrosine kinase activity. Post-translationally, ubiquitinated. Ubiquitination by CBL regulates the receptor stability and activity through proteasomal degradation. ANKS1A prevents ubiquitination and degradation. As to expression, specifically expressed in the central nervous system.

It localises to the cell membrane. It is found in the cell projection. The protein localises to the early endosome membrane. It catalyses the reaction L-tyrosyl-[protein] + ATP = O-phospho-L-tyrosyl-[protein] + ADP + H(+). Functionally, receptor tyrosine kinase which binds promiscuously GPI-anchored ephrin-A family ligands residing on adjacent cells, leading to contact-dependent bidirectional signaling into neighboring cells. The signaling pathway downstream of the receptor is referred to as forward signaling while the signaling pathway downstream of the ephrin ligand is referred to as reverse signaling. The GPI-anchored ephrin-A EFNA2, EFNA3, and EFNA5 are able to activate EPHA8 through phosphorylation. With EFNA5 may regulate integrin-mediated cell adhesion and migration on fibronectin substrate but also neurite outgrowth. During development of the nervous system also plays a role in axon guidance. Downstream effectors of the EPHA8 signaling pathway include FYN which promotes cell adhesion upon activation by EPHA8 and the MAP kinases in the stimulation of neurite outgrowth. The chain is Ephrin type-A receptor 8 (Epha8) from Mus musculus (Mouse).